Reading from the N-terminus, the 609-residue chain is Protein KINESIN LIGHT CHAIN-RELATED 1 (609 aa).

The disordered stretch occupies residues 1-77; it reads MPAMPGLVSV…TAAVIDVDDP (77 aa). Positions 38–55 are enriched in low complexity; sequence KKTPSSTPSRSKPSPNRS. TPR repeat units lie at residues 140–173, 183–216, 225–258, 267–301, 307–340, 349–382, 392–425, 433–466, 474–507, and 516–549; these read AMSL…PDPT, FSGH…QIQT, GETC…HRAH, AADR…IASG, ASID…FKAS, ASVF…YNKP, AGGL…LEDK, AGLE…LRAA, GVVL…LEQE, and LGVY…REEK. A disordered region spans residues 582-609; the sequence is LQNLIDPNARPPKKESSAKKWPSLGFKF.

This sequence belongs to the kinesin light chain family. Interacts with IQD1.

The protein resides in the cytoplasm. The protein localises to the cytoskeleton. This is Protein KINESIN LIGHT CHAIN-RELATED 1 from Arabidopsis thaliana (Mouse-ear cress).